Here is a 451-residue protein sequence, read N- to C-terminus: tRNA modification GTPase MnmE (451 aa).

Residues Arg-28, Glu-85, and Lys-124 each contribute to the (6S)-5-formyl-5,6,7,8-tetrahydrofolate site. The TrmE-type G domain occupies 220–377; the sequence is GMNVVLVGQP…LRSELLRVAG (158 aa). Asn-230 lines the K(+) pocket. Residues 230–235, 249–255, and 274–277 each bind GTP; these read NVGKSS, TDIAGTT, and DTAG. Ser-234 contacts Mg(2+). K(+) contacts are provided by Thr-249, Ile-251, and Thr-254. Residue Thr-255 coordinates Mg(2+). A (6S)-5-formyl-5,6,7,8-tetrahydrofolate-binding site is contributed by Lys-451.

The protein belongs to the TRAFAC class TrmE-Era-EngA-EngB-Septin-like GTPase superfamily. TrmE GTPase family. In terms of assembly, homodimer. Heterotetramer of two MnmE and two MnmG subunits. K(+) serves as cofactor.

It is found in the cytoplasm. Its function is as follows. Exhibits a very high intrinsic GTPase hydrolysis rate. Involved in the addition of a carboxymethylaminomethyl (cmnm) group at the wobble position (U34) of certain tRNAs, forming tRNA-cmnm(5)s(2)U34. In Aromatoleum aromaticum (strain DSM 19018 / LMG 30748 / EbN1) (Azoarcus sp. (strain EbN1)), this protein is tRNA modification GTPase MnmE.